The following is a 443-amino-acid chain: Xaa-Pro dipeptidase (443 aa).

Residues Asp246, Asp257, His339, Glu384, and Glu423 each contribute to the Mn(2+) site.

It belongs to the peptidase M24B family. Bacterial-type prolidase subfamily. The cofactor is Mn(2+).

The enzyme catalyses Xaa-L-Pro dipeptide + H2O = an L-alpha-amino acid + L-proline. Its function is as follows. Splits dipeptides with a prolyl residue in the C-terminal position. The protein is Xaa-Pro dipeptidase of Yersinia pseudotuberculosis serotype I (strain IP32953).